The following is a 907-amino-acid chain: Glutamate receptor 1 (907 aa).

An N-terminal signal peptide occupies residues 1–18 (MPYIFAFFCTGFLGAVVG). Residues 19–536 (ANFPNNIQIG…GVFSFLDPLA (518 aa)) are Extracellular-facing. N-linked (GlcNAc...) asparagine glycans are attached at residues Asn-63, Asn-249, Asn-257, Asn-363, Asn-401, and Asn-406. Residues Cys-75 and Cys-323 are joined by a disulfide bond. The L-glutamate site is built by Pro-492, Thr-494, and Arg-499. Residues 537–557 (YEIWMCIVFAYIGVSVVLFLV) traverse the membrane as a helical segment. Residues 558-584 (SRFSPYEWHSEEFEEGRDQTTSDQSNE) lie on the Cytoplasmic side of the membrane. The segment at residues 585–600 (FGIFNSLWFSLGAFMQ) is an intramembrane region (helical; Pore-forming). Residues 601 to 603 (QGC) lie within the membrane without spanning it. A lipid anchor (S-palmitoyl cysteine) is attached at Cys-603. The Cytoplasmic portion of the chain corresponds to 604–609 (DISPRS). A helical membrane pass occupies residues 610–630 (LSGRIVGGVWWFFTLIIISSY). Over 631–805 (TANLAAFLTV…DKTSALSLSN (175 aa)) the chain is Extracellular. Position 645 is a phosphoserine (Ser-645). Positions 668 and 669 each coordinate L-glutamate. At Ser-710 the chain carries Phosphoserine. An L-glutamate-binding site is contributed by Glu-719. A disulfide bond links Cys-732 and Cys-787. The helical transmembrane segment at 806–826 (VAGVFYILIGGLGLAMLVALI) threads the bilayer. The Cytoplasmic portion of the chain corresponds to 827–907 (EFCYKSRSES…SGMPLGATGL (81 aa)). Cys-829 carries S-palmitoyl cysteine lipidation. Residues Ser-849 and Ser-863 each carry the phosphoserine modification. Residues 857 to 881 (STLPRNSGAGASGGSGSGENGRVVS) form a disordered region. Residues 866-875 (GASGGSGSGE) are compositionally biased toward gly residues. A PDZ-binding motif is present at residues 904–907 (ATGL).

It belongs to the glutamate-gated ion channel (TC 1.A.10.1) family. GRIA1 subfamily. In terms of assembly, homotetramer or heterotetramer of pore-forming glutamate receptor subunits. Heteromeric assembly can be the result of both receptor subtype and flip or flop form and according the composition, one partner can be dominant with respect to the fast desensitizing current component, whereas the other can determine the steady-state component. Tetramers may be formed by the dimerization of dimers. Found in a complex with GRIA2, GRIA3, GRIA4, CNIH2, CNIH3, CACNG2, CACNG3, CACNG4, CACNG5, CACNG7 and CACNG8. Interacts with HIP1 and RASGRF2. Interacts with SYNDIG1 and GRIA2. Interacts with DLG1 (via C-terminus). Interacts with LRFN1. Interacts with PRKG2. Interacts with CNIH2 and CACNG2. Interacts with CACNG5; this interaction modulates the gating. Interacts (via C-terminus) with PDLIM4 (via LIM domain); this interaction as well as the interaction of PDLIM4 with alpha-actinin is required for their colocalization in early endosomes. Interacts with SNX27 (via PDZ domain); the interaction is required for recycling to the plasma membrane when endocytosed and prevent degradation in lysosomes. Interacts (via PDZ-binding motif) with SHANK3 (via PDZ domain). Interacts with CACNG3; associates GRIA1 with the adapter protein complex 4 (AP-4) to target GRIA1 to the somatodendritic compartment of neurons. Interacts with CACNG2; this interaction mediates traffick to the plasma membrane and modulation of desensitization. Interacts with CNIH2 and CNIH3; this interaction promotes expression at the plasma membrane and extensively modulates their gating properties by slowing deactivation and desensitization kinetics. Found in a complex with GRIA2, GRIA3, GRIA4, DLG4, CACNG8 and CNIH2. Post-translationally, phosphorylated at Ser-645. Phosphorylated at Ser-710 by PKC. Phosphorylated at Ser-849 by PKC, PKA and CAMK2. Phosphorylated at Ser-863 by PKC, PKA and PRKG2. Phosphorylation of Ser-863 is reduced by induction of long-term depression and increased by induction of long-term potentiation. In terms of processing, palmitoylated. Depalmitoylated by CPT1C and upon L-glutamate stimulation. ZDHHC3/GODZ specifically palmitoylates Cys-603, which leads to Golgi retention and decreased cell surface expression. In contrast, Cys-829 palmitoylation does not affect cell surface expression but regulates stimulation-dependent endocytosis. Expressed in the outer plexiform layer of the retina of the eye (at protein level). Expressed in the forebrain and hippocampus (at protein level).

It localises to the cell membrane. Its subcellular location is the endoplasmic reticulum membrane. The protein localises to the postsynaptic cell membrane. The protein resides in the postsynaptic density membrane. It is found in the cell projection. It localises to the dendrite. Its subcellular location is the dendritic spine. The protein localises to the early endosome membrane. The protein resides in the recycling endosome membrane. It is found in the presynapse. It localises to the synapse. It catalyses the reaction Ca(2+)(in) = Ca(2+)(out). The catalysed reaction is Na(+)(in) = Na(+)(out). The enzyme catalyses Mg(2+)(in) = Mg(2+)(out). It carries out the reaction Li(+)(in) = Li(+)(out). It catalyses the reaction K(+)(in) = K(+)(out). The catalysed reaction is Sr(2+)(in) = Sr(2+)(out). Functionally, ionotropic glutamate receptor that functions as a ligand-gated cation channel, gated by L-glutamate and glutamatergic agonists such as alpha-amino-3-hydroxy-5-methyl-4-isoxazolepropionic acid (AMPA), quisqualic acid, and kainic acid. L-glutamate acts as an excitatory neurotransmitter at many synapses in the central nervous system. Binding of the excitatory neurotransmitter L-glutamate induces a conformation change, leading to the opening of the cation channel, and thereby converts the chemical signal to an electrical impulse upon entry of monovalent and divalent cations such as sodium and calcium. The receptor then desensitizes rapidly and enters in a transient inactive state, characterized by the presence of bound agonist. In the presence of CACNG2 or CACNG4 or CACNG7 or CACNG8, shows resensitization which is characterized by a delayed accumulation of current flux upon continued application of L-glutamate. Calcium (Ca(2+)) permeability depends on subunits composition and, heteromeric channels containing edited GRIA2 subunit are calcium-impermeable. Also permeable to other divalents cations such as strontium(2+) and magnesium(2+) and monovalent cations such as potassium(1+) and lithium(1+). The sequence is that of Glutamate receptor 1 from Mus musculus (Mouse).